Here is a 366-residue protein sequence, read N- to C-terminus: Probable neutral protease 2 homolog B (366 aa).

Positions 1-19 (MQVIVALAALSSLAAPALG) are cleaved as a signal peptide. Residues 20–189 (FSIPRGVPVS…RGPRSRITKR (170 aa)) constitute a propeptide that is removed on maturation. 3 disulfides stabilise this stretch: C197/C267, C274/C292, and C306/C366. Zn(2+) is bound at residue H317. The active site involves E318. Residues H321 and D332 each coordinate Zn(2+).

The protein belongs to the peptidase M35 family. The cofactor is Zn(2+).

The protein localises to the secreted. It catalyses the reaction Preferential cleavage of bonds with hydrophobic residues in P1'. Also 3-Asn-|-Gln-4 and 8-Gly-|-Ser-9 bonds in insulin B chain.. Probable secreted metalloprotease that shows high activities on basic nuclear substrates such as histone and protamine. May be involved in virulence. This chain is Probable neutral protease 2 homolog B (NpII-B), found in Trichophyton rubrum (Athlete's foot fungus).